The chain runs to 107 residues: Nucleoid-associated protein RBE_0048 (107 aa).

It belongs to the YbaB/EbfC family. In terms of assembly, homodimer.

The protein localises to the cytoplasm. It localises to the nucleoid. Binds to DNA and alters its conformation. May be involved in regulation of gene expression, nucleoid organization and DNA protection. The protein is Nucleoid-associated protein RBE_0048 of Rickettsia bellii (strain RML369-C).